Consider the following 172-residue polypeptide: Adenine phosphoribosyltransferase (172 aa).

Belongs to the purine/pyrimidine phosphoribosyltransferase family. As to quaternary structure, homodimer.

Its subcellular location is the cytoplasm. The catalysed reaction is AMP + diphosphate = 5-phospho-alpha-D-ribose 1-diphosphate + adenine. It participates in purine metabolism; AMP biosynthesis via salvage pathway; AMP from adenine: step 1/1. Catalyzes a salvage reaction resulting in the formation of AMP, that is energically less costly than de novo synthesis. The protein is Adenine phosphoribosyltransferase of Rippkaea orientalis (strain PCC 8801 / RF-1) (Cyanothece sp. (strain PCC 8801)).